An 81-amino-acid chain; its full sequence is ATP synthase subunit c, chloroplastic (81 aa).

Helical transmembrane passes span 3 to 23 and 57 to 77; these read PLIAAASVIAAGLAVGLASIG and LAFMEALTIYGLVVALALLFA.

Belongs to the ATPase C chain family. In terms of assembly, F-type ATPases have 2 components, F(1) - the catalytic core - and F(0) - the membrane proton channel. F(1) has five subunits: alpha(3), beta(3), gamma(1), delta(1), epsilon(1). F(0) has four main subunits: a(1), b(1), b'(1) and c(10-14). The alpha and beta chains form an alternating ring which encloses part of the gamma chain. F(1) is attached to F(0) by a central stalk formed by the gamma and epsilon chains, while a peripheral stalk is formed by the delta, b and b' chains.

The protein resides in the plastid. It localises to the chloroplast thylakoid membrane. Its function is as follows. F(1)F(0) ATP synthase produces ATP from ADP in the presence of a proton or sodium gradient. F-type ATPases consist of two structural domains, F(1) containing the extramembraneous catalytic core and F(0) containing the membrane proton channel, linked together by a central stalk and a peripheral stalk. During catalysis, ATP synthesis in the catalytic domain of F(1) is coupled via a rotary mechanism of the central stalk subunits to proton translocation. Functionally, key component of the F(0) channel; it plays a direct role in translocation across the membrane. A homomeric c-ring of between 10-14 subunits forms the central stalk rotor element with the F(1) delta and epsilon subunits. In Agrostis stolonifera (Creeping bentgrass), this protein is ATP synthase subunit c, chloroplastic.